We begin with the raw amino-acid sequence, 266 residues long: 22 kDa alpha-zein 8 (266 aa).

A signal peptide spans 1 to 21; that stretch reads MATKILALLALLALFVSATNA.

It belongs to the zein family.

Zeins are major seed storage proteins. This is 22 kDa alpha-zein 8 from Zea mays (Maize).